A 438-amino-acid polypeptide reads, in one-letter code: LIM domain-containing protein C4F6.12 (438 aa).

Disordered regions lie at residues 1-37 (MHSP…NNLV) and 49-78 (TGGR…TIKQ). Residues 24 to 37 (SPVSTNGSPLNNLV) show a composition bias toward polar residues. Phosphoserine is present on residues Ser-67 and Ser-96. 3 LIM zinc-binding domains span residues 256–316 (KSCH…QFSP), 318–375 (CKHC…NKYA), and 376–435 (VKCK…SVKF).

This Schizosaccharomyces pombe (strain 972 / ATCC 24843) (Fission yeast) protein is LIM domain-containing protein C4F6.12.